A 33-amino-acid polypeptide reads, in one-letter code: Dermonecrotic toxin LiSicTox-alphaI-1 (33 aa).

Glu-32 provides a ligand contact to Mg(2+).

The protein belongs to the arthropod phospholipase D family. Class II subfamily. Mg(2+) is required as a cofactor. Post-translationally, contains 2 disulfide bonds. Expressed by the venom gland.

The protein resides in the secreted. The catalysed reaction is an N-(acyl)-sphingosylphosphocholine = an N-(acyl)-sphingosyl-1,3-cyclic phosphate + choline. It carries out the reaction an N-(acyl)-sphingosylphosphoethanolamine = an N-(acyl)-sphingosyl-1,3-cyclic phosphate + ethanolamine. It catalyses the reaction a 1-acyl-sn-glycero-3-phosphocholine = a 1-acyl-sn-glycero-2,3-cyclic phosphate + choline. The enzyme catalyses a 1-acyl-sn-glycero-3-phosphoethanolamine = a 1-acyl-sn-glycero-2,3-cyclic phosphate + ethanolamine. In terms of biological role, dermonecrotic toxins cleave the phosphodiester linkage between the phosphate and headgroup of certain phospholipids (sphingolipid and lysolipid substrates), forming an alcohol (often choline) and a cyclic phosphate. This toxin acts on sphingomyelin (SM). It may also act on ceramide phosphoethanolamine (CPE), lysophosphatidylcholine (LPC) and lysophosphatidylethanolamine (LPE), but not on lysophosphatidylserine (LPS), and lysophosphatidylglycerol (LPG). It acts by transphosphatidylation, releasing exclusively cyclic phosphate products as second products. In vivo, intradermal injection induces dermonecrosis. Induces hemolysis, increased vascular permeability, edema, inflammatory response, and platelet aggregation. The chain is Dermonecrotic toxin LiSicTox-alphaI-1 from Loxosceles intermedia (Brown spider).